Here is a 293-residue protein sequence, read N- to C-terminus: Ribosomal protein L11 methyltransferase (293 aa).

Positions 145, 166, 188, and 230 each coordinate S-adenosyl-L-methionine.

This sequence belongs to the methyltransferase superfamily. PrmA family.

The protein localises to the cytoplasm. It catalyses the reaction L-lysyl-[protein] + 3 S-adenosyl-L-methionine = N(6),N(6),N(6)-trimethyl-L-lysyl-[protein] + 3 S-adenosyl-L-homocysteine + 3 H(+). Methylates ribosomal protein L11. The protein is Ribosomal protein L11 methyltransferase of Shigella sonnei (strain Ss046).